The following is a 207-amino-acid chain: 2,3-bisphosphoglycerate-dependent phosphoglycerate mutase (207 aa).

Substrate is bound by residues 9–16 (RHGQSDWN), 22–23 (TG), arginine 61, 88–91 (ERDY), lysine 99, 115–116 (RR), and 159–160 (GN). Histidine 10 acts as the Tele-phosphohistidine intermediate in catalysis. Glutamate 88 (proton donor/acceptor) is an active-site residue.

The protein belongs to the phosphoglycerate mutase family. BPG-dependent PGAM subfamily. In terms of assembly, homodimer.

The enzyme catalyses (2R)-2-phosphoglycerate = (2R)-3-phosphoglycerate. It functions in the pathway carbohydrate degradation; glycolysis; pyruvate from D-glyceraldehyde 3-phosphate: step 3/5. Functionally, catalyzes the interconversion of 2-phosphoglycerate and 3-phosphoglycerate. This is 2,3-bisphosphoglycerate-dependent phosphoglycerate mutase from Beijerinckia indica subsp. indica (strain ATCC 9039 / DSM 1715 / NCIMB 8712).